The sequence spans 207 residues: N-(5'-phosphoribosyl)anthranilate isomerase (207 aa).

The protein belongs to the TrpF family.

It catalyses the reaction N-(5-phospho-beta-D-ribosyl)anthranilate = 1-(2-carboxyphenylamino)-1-deoxy-D-ribulose 5-phosphate. Its pathway is amino-acid biosynthesis; L-tryptophan biosynthesis; L-tryptophan from chorismate: step 3/5. The chain is N-(5'-phosphoribosyl)anthranilate isomerase from Legionella pneumophila subsp. pneumophila (strain Philadelphia 1 / ATCC 33152 / DSM 7513).